Consider the following 157-residue polypeptide: Protein Smg (157 aa).

This sequence belongs to the Smg family.

The polypeptide is Protein Smg (Yersinia pseudotuberculosis serotype O:1b (strain IP 31758)).